Consider the following 227-residue polypeptide: MATEDVKLIGSWASVYVMRARIALHLKSISYEFLQETYGSKSELLLKSNPVHKKMPVLIHADKPVCESNIIVHYIDEAWNSSGPSILPSHPYDRAIARFWAAYIDDQWFISVRSILTAQGDEEKKAAIAQVEERTKLLEKAFNDCSQGKPFFNGDHIGYLDIALGSFLGWWRVVELDANHKFLDETKTPSLVKWAERFCDDPAVKPIMPEITKLAEFARKLFPKRQA.

The 80-residue stretch at 4 to 83 (EDVKLIGSWA…YIDEAWNSSG (80 aa)) folds into the GST N-terminal domain. Glutathione-binding positions include 14-15 (SV), 40-41 (SK), 54-55 (KM), and 67-68 (ES). The GST C-terminal domain maps to 90–221 (HPYDRAIARF…TKLAEFARKL (132 aa)).

The protein belongs to the GST superfamily. Tau family.

It localises to the cytoplasm. The protein localises to the cytosol. It carries out the reaction RX + glutathione = an S-substituted glutathione + a halide anion + H(+). May be involved in the conjugation of reduced glutathione to a wide number of exogenous and endogenous hydrophobic electrophiles and have a detoxification role against certain herbicides. The polypeptide is Glutathione S-transferase U18 (GSTU18) (Arabidopsis thaliana (Mouse-ear cress)).